The chain runs to 219 residues: tRNA (guanine-N(7)-)-methyltransferase (219 aa).

Residues glutamate 43, aspartate 68, glutamate 101, and asparagine 124 each coordinate S-adenosyl-L-methionine. The substrate site is built by lysine 128 and aspartate 160.

It belongs to the class I-like SAM-binding methyltransferase superfamily. TrmB family.

It carries out the reaction guanosine(46) in tRNA + S-adenosyl-L-methionine = N(7)-methylguanosine(46) in tRNA + S-adenosyl-L-homocysteine. It functions in the pathway tRNA modification; N(7)-methylguanine-tRNA biosynthesis. Catalyzes the formation of N(7)-methylguanine at position 46 (m7G46) in tRNA. This Clostridium botulinum (strain Alaska E43 / Type E3) protein is tRNA (guanine-N(7)-)-methyltransferase.